The primary structure comprises 352 residues: Probable dual-specificity RNA methyltransferase RlmN (352 aa).

The active-site Proton acceptor is the Glu-99. The region spanning Glu-105 to Arg-325 is the Radical SAM core domain. The cysteines at positions 112 and 336 are disulfide-linked. Cys-119, Cys-123, and Cys-126 together coordinate [4Fe-4S] cluster. S-adenosyl-L-methionine-binding positions include Gly-164 to Glu-165, Ser-196, Ser-217 to His-219, and His-293. Residue Cys-336 is the S-methylcysteine intermediate of the active site.

Belongs to the radical SAM superfamily. RlmN family. It depends on [4Fe-4S] cluster as a cofactor.

It is found in the cytoplasm. The catalysed reaction is adenosine(2503) in 23S rRNA + 2 reduced [2Fe-2S]-[ferredoxin] + 2 S-adenosyl-L-methionine = 2-methyladenosine(2503) in 23S rRNA + 5'-deoxyadenosine + L-methionine + 2 oxidized [2Fe-2S]-[ferredoxin] + S-adenosyl-L-homocysteine. The enzyme catalyses adenosine(37) in tRNA + 2 reduced [2Fe-2S]-[ferredoxin] + 2 S-adenosyl-L-methionine = 2-methyladenosine(37) in tRNA + 5'-deoxyadenosine + L-methionine + 2 oxidized [2Fe-2S]-[ferredoxin] + S-adenosyl-L-homocysteine. Specifically methylates position 2 of adenine 2503 in 23S rRNA and position 2 of adenine 37 in tRNAs. This is Probable dual-specificity RNA methyltransferase RlmN from Porphyromonas gingivalis (strain ATCC 33277 / DSM 20709 / CIP 103683 / JCM 12257 / NCTC 11834 / 2561).